The chain runs to 246 residues: Peroxisomal membrane protein 11A (246 aa).

Over 1–93 (MDAFIRVANQ…LCLTLANLNR (93 aa)) the chain is Cytoplasmic. A helical transmembrane segment spans residues 94–114 (VVYYICDTVLWAKSVGLTSGI). At 115–217 (NREKWQMRAA…LNQLGIYKSN (103 aa)) the chain is on the lumenal side. The helical transmembrane segment at 218–238 (LGVVGFGGLVSSVAGLITVVY) threads the bilayer. The required for homodimerization, interaction with PEX11G, and peroxisomal localization stretch occupies residues 218-238 (LGVVGFGGLVSSVAGLITVVY). The Cytoplasmic segment spans residues 239–246 (PQLKLKAR).

It belongs to the peroxin-11 family. Homodimer. Heterodimer with PEX11G. Probably interacts with COPB2 and COPA. Interacts with PEX19. Interacts with FIS1. As to expression, expressed at high levels in kidney, liver, lung, brain, and testis and at low levels in heart, spleen and skeletal muscle.

The protein resides in the peroxisome membrane. Its function is as follows. May be involved in peroxisomal proliferation and may regulate peroxisomes division. May mediate binding of coatomer proteins to the peroxisomal membrane. Promotes membrane protrusion and elongation on the peroxisomal surface. This Rattus norvegicus (Rat) protein is Peroxisomal membrane protein 11A (Pex11a).